The chain runs to 611 residues: tRNA uridine 5-carboxymethylaminomethyl modification enzyme MnmG (611 aa).

Residues glycine 8 to glycine 13, valine 120, and serine 175 each bind FAD. Residue glycine 268–phenylalanine 282 participates in NAD(+) binding. FAD is bound at residue glutamine 365.

This sequence belongs to the MnmG family. Homodimer. Heterotetramer of two MnmE and two MnmG subunits. Requires FAD as cofactor.

The protein resides in the cytoplasm. In terms of biological role, NAD-binding protein involved in the addition of a carboxymethylaminomethyl (cmnm) group at the wobble position (U34) of certain tRNAs, forming tRNA-cmnm(5)s(2)U34. The chain is tRNA uridine 5-carboxymethylaminomethyl modification enzyme MnmG from Mycoplasmoides gallisepticum (strain R(low / passage 15 / clone 2)) (Mycoplasma gallisepticum).